Reading from the N-terminus, the 125-residue chain is Small ribosomal subunit protein uS12m (125 aa).

Disordered stretches follow at residues 1–50 and 106–125; these read MPTL…SAPR and GIPN…PKSI. Residues 10–23 show a composition bias toward basic and acidic residues; it reads HGREEKRRTDRTRA.

The protein belongs to the universal ribosomal protein uS12 family.

Its subcellular location is the mitochondrion. Its function is as follows. Protein S12 is involved in the translation initiation step. In Magnolia soulangeana (Saucer magnolia), this protein is Small ribosomal subunit protein uS12m (RPS12).